We begin with the raw amino-acid sequence, 318 residues long: Mitochondrial coenzyme A transporter SLC25A42 (318 aa).

Solcar repeat units follow at residues 31-117 (RQVL…YKRI), 129-214 (LPPW…LKSL), and 224-312 (PYPF…MQIL). 6 helical membrane-spanning segments follow: residues 33 to 53 (VLSSLLSGALAGALAKTAVAP), 89 to 109 (LWRGNSATMVRVIPYAAIQFS), 135 to 155 (LLAGALAGTTAASLTYPLDLV), 186 to 206 (LYFGFTPTVLGVIPYAGLSFF), 230 to 250 (MVFGACAGLIGQSASYPLDVV), and 293 to 313 (LKGPIAVGISFTTFDLMQILL).

The protein belongs to the mitochondrial carrier (TC 2.A.29) family. As to expression, widely expressed. Highly expressed in adipose, followed by hypothalamus and brain coronal sections containing corpus callosum, fornix, thalamus, hypothalamus, optic chiasm, pons, midbrain, and cerebellum.

It localises to the mitochondrion inner membrane. The enzyme catalyses ADP(out) + CoA(in) = ADP(in) + CoA(out). The catalysed reaction is 3'-dephospho-CoA(in) + ADP(out) = 3'-dephospho-CoA(out) + ADP(in). It catalyses the reaction adenosine 3',5'-bisphosphate(in) + ADP(out) = adenosine 3',5'-bisphosphate(out) + ADP(in). It carries out the reaction AMP(in) + ADP(out) = AMP(out) + ADP(in). The enzyme catalyses dADP(in) + ADP(out) = dADP(out) + ADP(in). The catalysed reaction is ADP(in) + ATP(out) = ADP(out) + ATP(in). Its function is as follows. Mitochondrial carrier mediating the transport of coenzyme A (CoA) in mitochondria in exchange for intramitochondrial (deoxy)adenine nucleotides and adenosine 3',5'-diphosphate. In Rattus norvegicus (Rat), this protein is Mitochondrial coenzyme A transporter SLC25A42 (Slc25a42).